We begin with the raw amino-acid sequence, 677 residues long: Methionine--tRNA ligase (677 aa).

The short motif at 15–25 (PYANGSIHLGH) is the 'HIGH' region element. 4 residues coordinate Zn(2+): cysteine 146, cysteine 149, cysteine 159, and cysteine 162. The short motif at 333 to 337 (KMSKS) is the 'KMSKS' region element. Lysine 336 provides a ligand contact to ATP. In terms of domain architecture, tRNA-binding spans 575 to 677 (DFAKVDLRVA…AGAKPGHQVK (103 aa)).

Belongs to the class-I aminoacyl-tRNA synthetase family. MetG type 1 subfamily. In terms of assembly, homodimer. The cofactor is Zn(2+).

The protein resides in the cytoplasm. The catalysed reaction is tRNA(Met) + L-methionine + ATP = L-methionyl-tRNA(Met) + AMP + diphosphate. Is required not only for elongation of protein synthesis but also for the initiation of all mRNA translation through initiator tRNA(fMet) aminoacylation. This is Methionine--tRNA ligase from Escherichia coli (strain UTI89 / UPEC).